Reading from the N-terminus, the 458-residue chain is RuvB-like helicase 1 (458 aa).

The span at 1 to 18 shows a compositional bias: basic and acidic residues; that stretch reads MVQITEVKENQSSRESRT. Residues 1-20 form a disordered region; the sequence is MVQITEVKENQSSRESRTAA. Residue 73-80 participates in ATP binding; it reads GPPATGKT.

The protein belongs to the RuvB family. As to quaternary structure, may form heterododecamers with RVB2. Component of the SWR1 chromatin remodeling complex, the INO80 chromatin remodeling complex, and of the R2TP complex.

The protein resides in the nucleus. It catalyses the reaction ATP + H2O = ADP + phosphate + H(+). Its function is as follows. DNA helicase which participates in several chromatin remodeling complexes, including the SWR1 and the INO80 complexes. The SWR1 complex mediates the ATP-dependent exchange of histone H2A for the H2A variant HZT1 leading to transcriptional regulation of selected genes by chromatin remodeling. The INO80 complex remodels chromatin by shifting nucleosomes and is involved in DNA repair. Also involved in pre-rRNA processing. This is RuvB-like helicase 1 (RVB1) from Candida albicans (strain SC5314 / ATCC MYA-2876) (Yeast).